We begin with the raw amino-acid sequence, 650 residues long: Macrolide export ATP-binding/permease protein MacB (650 aa).

An ABC transporter domain is found at 6 to 244 (LKLTGITRRF…ASSPEAASSP (239 aa)). ATP is bound at residue 42 to 49 (GASGSGKS). Residues 227 to 246 (QTRPEEATASSPEAASSPAT) are disordered. Residues 233-246 (ATASSPEAASSPAT) are compositionally biased toward low complexity. 4 consecutive transmembrane segments (helical) span residues 275–295 (FLTM…VALG), 523–543 (LTLL…IGVM), 580–600 (LVCL…GVLF), and 615–635 (SIIA…FFPA).

This sequence belongs to the ABC transporter superfamily. Macrolide exporter (TC 3.A.1.122) family. As to quaternary structure, homodimer. Part of the tripartite efflux system MacAB-TolC, which is composed of an inner membrane transporter, MacB, a periplasmic membrane fusion protein, MacA, and an outer membrane component, TolC. The complex forms a large protein conduit and can translocate molecules across both the inner and outer membranes. Interacts with MacA.

It is found in the cell inner membrane. Functionally, part of the tripartite efflux system MacAB-TolC. MacB is a non-canonical ABC transporter that contains transmembrane domains (TMD), which form a pore in the inner membrane, and an ATP-binding domain (NBD), which is responsible for energy generation. Confers resistance against macrolides. The chain is Macrolide export ATP-binding/permease protein MacB from Pectobacterium atrosepticum (strain SCRI 1043 / ATCC BAA-672) (Erwinia carotovora subsp. atroseptica).